We begin with the raw amino-acid sequence, 242 residues long: Pyridoxine 5'-phosphate synthase (242 aa).

Asn6 is a binding site for 3-amino-2-oxopropyl phosphate. Residue 8–9 participates in 1-deoxy-D-xylulose 5-phosphate binding; sequence DH. Arg17 contributes to the 3-amino-2-oxopropyl phosphate binding site. The active-site Proton acceptor is His42. 1-deoxy-D-xylulose 5-phosphate contacts are provided by Arg44 and His49. The active-site Proton acceptor is Glu69. Thr99 is a 1-deoxy-D-xylulose 5-phosphate binding site. The active-site Proton donor is the His190. Residues Gly191 and 212–213 each bind 3-amino-2-oxopropyl phosphate; that span reads GH.

Belongs to the PNP synthase family. In terms of assembly, homooctamer; tetramer of dimers.

It localises to the cytoplasm. The enzyme catalyses 3-amino-2-oxopropyl phosphate + 1-deoxy-D-xylulose 5-phosphate = pyridoxine 5'-phosphate + phosphate + 2 H2O + H(+). The protein operates within cofactor biosynthesis; pyridoxine 5'-phosphate biosynthesis; pyridoxine 5'-phosphate from D-erythrose 4-phosphate: step 5/5. Catalyzes the complicated ring closure reaction between the two acyclic compounds 1-deoxy-D-xylulose-5-phosphate (DXP) and 3-amino-2-oxopropyl phosphate (1-amino-acetone-3-phosphate or AAP) to form pyridoxine 5'-phosphate (PNP) and inorganic phosphate. The protein is Pyridoxine 5'-phosphate synthase of Neisseria meningitidis serogroup C.